The chain runs to 150 residues: Actin-depolymerizing factor 3 (150 aa).

The ADF-H domain occupies 7-150 (GVAVSEECKA…TLDVLKDHTS (144 aa)).

Belongs to the actin-binding proteins ADF family.

Actin-depolymerizing protein. Severs actin filaments (F-actin) and binds to actin monomers. The protein is Actin-depolymerizing factor 3 (ADF3) of Oryza sativa subsp. japonica (Rice).